A 195-amino-acid chain; its full sequence is Cysteine/O-acetylserine efflux protein (195 aa).

5 helical membrane-spanning segments follow: residues 47–67 (SLGF…LAVI), 70–90 (AAVH…AWKI), 105–125 (ISFW…LYGV), 142–162 (VVGV…CWAL), and 177–194 (QLNI…VRIF).

It belongs to the Rht family.

Its subcellular location is the cell inner membrane. It carries out the reaction O-acetyl-L-serine(in) = O-acetyl-L-serine(out). The catalysed reaction is L-cysteine(in) = L-cysteine(out). Exporter of O-acetylserine (OAS) and cysteine. The polypeptide is Cysteine/O-acetylserine efflux protein (eamB) (Shigella boydii serotype 4 (strain Sb227)).